We begin with the raw amino-acid sequence, 157 residues long: MKEKGRKVIATNRKARHNYTILDVYEAGIALVGTEVKSLREGKASLVDAFATVDDGEVWLRSLHIPEYTQGTWTNHAPRRTRKLLLHKQEIEHLVGKTREGNQTLVPLSMYFSDGKVKVELALAKGKQDYDKRQDLARRTAEREVTRELGRRVKGMR.

It belongs to the SmpB family.

The protein localises to the cytoplasm. In terms of biological role, required for rescue of stalled ribosomes mediated by trans-translation. Binds to transfer-messenger RNA (tmRNA), required for stable association of tmRNA with ribosomes. tmRNA and SmpB together mimic tRNA shape, replacing the anticodon stem-loop with SmpB. tmRNA is encoded by the ssrA gene; the 2 termini fold to resemble tRNA(Ala) and it encodes a 'tag peptide', a short internal open reading frame. During trans-translation Ala-aminoacylated tmRNA acts like a tRNA, entering the A-site of stalled ribosomes, displacing the stalled mRNA. The ribosome then switches to translate the ORF on the tmRNA; the nascent peptide is terminated with the 'tag peptide' encoded by the tmRNA and targeted for degradation. The ribosome is freed to recommence translation, which seems to be the essential function of trans-translation. The chain is SsrA-binding protein from Rhodococcus jostii (strain RHA1).